A 1104-amino-acid polypeptide reads, in one-letter code: Lon protease homolog, mitochondrial (1104 aa).

The transit peptide at 1–58 (MLPLRAFARLAQRPRLSRPTQLARSSLPRPSPSRPAAHYLALAPAPSTRFLHSSPPVL) directs the protein to the mitochondrion. Positions 8–144 (ARLAQRPRLS…PGAGGPKEVA (137 aa)) are disordered. Residues 22-46 (LARSSLPRPSPSRPAAHYLALAPAP) are compositionally biased toward low complexity. The segment covering 80–103 (KQDDQVEKPLPDAESSKSAEERAK) has biased composition (basic and acidic residues). Over residues 104–128 (SQSSKPDIKASSSDSVSSSAPAPGS) the composition is skewed to low complexity. Gly residues predominate over residues 129–139 (ADGGSPPGAGG). A Lon N-terminal domain is found at 155–444 (VLAIPITHRP…RALVLLKKEL (290 aa)). 597 to 604 (GPPGVGKT) serves as a coordination point for ATP. In terms of domain architecture, Lon proteolytic spans 895-1082 (SPPAGVSTGL…RQVLHEAFRG (188 aa)). Residues S987 and K1030 contribute to the active site.

The protein belongs to the peptidase S16 family. In terms of assembly, homohexamer or homoheptamer. Organized in a ring with a central cavity.

Its subcellular location is the mitochondrion matrix. The catalysed reaction is Hydrolysis of proteins in presence of ATP.. Functionally, ATP-dependent serine protease that mediates the selective degradation of misfolded, unassembled or oxidatively damaged polypeptides as well as certain short-lived regulatory proteins in the mitochondrial matrix. May also have a chaperone function in the assembly of inner membrane protein complexes. Participates in the regulation of mitochondrial gene expression and in the maintenance of the integrity of the mitochondrial genome. Binds to mitochondrial DNA in a site-specific manner. The polypeptide is Lon protease homolog, mitochondrial (Cryptococcus neoformans var. neoformans serotype D (strain B-3501A) (Filobasidiella neoformans)).